The sequence spans 321 residues: Lipoyl synthase (321 aa).

[4Fe-4S] cluster-binding residues include Cys68, Cys73, Cys79, Cys94, Cys98, Cys101, and Ser308. The Radical SAM core domain occupies 80 to 297 (FNHGTATFMI…KEEALAMGFT (218 aa)).

Belongs to the radical SAM superfamily. Lipoyl synthase family. It depends on [4Fe-4S] cluster as a cofactor.

It localises to the cytoplasm. The enzyme catalyses [[Fe-S] cluster scaffold protein carrying a second [4Fe-4S](2+) cluster] + N(6)-octanoyl-L-lysyl-[protein] + 2 oxidized [2Fe-2S]-[ferredoxin] + 2 S-adenosyl-L-methionine + 4 H(+) = [[Fe-S] cluster scaffold protein] + N(6)-[(R)-dihydrolipoyl]-L-lysyl-[protein] + 4 Fe(3+) + 2 hydrogen sulfide + 2 5'-deoxyadenosine + 2 L-methionine + 2 reduced [2Fe-2S]-[ferredoxin]. It participates in protein modification; protein lipoylation via endogenous pathway; protein N(6)-(lipoyl)lysine from octanoyl-[acyl-carrier-protein]: step 2/2. Catalyzes the radical-mediated insertion of two sulfur atoms into the C-6 and C-8 positions of the octanoyl moiety bound to the lipoyl domains of lipoate-dependent enzymes, thereby converting the octanoylated domains into lipoylated derivatives. The chain is Lipoyl synthase from Photorhabdus laumondii subsp. laumondii (strain DSM 15139 / CIP 105565 / TT01) (Photorhabdus luminescens subsp. laumondii).